We begin with the raw amino-acid sequence, 497 residues long: Acetyltransferase adrJ (497 aa).

Residues H174 and D422 each act as proton acceptor in the active site. The segment at S430–V451 is disordered.

Belongs to the plant acyltransferase family. Monomer.

Its pathway is secondary metabolite biosynthesis; terpenoid biosynthesis. In terms of biological role, acetyltransferase; part of the gene cluster that mediates the biosynthesis of andrastins, meroterpenoid compounds that exhibit inhibitory activity against ras farnesyltransferase, suggesting that they could be promising leads for antitumor agents. The first step of the pathway is the synthesis of 3,5-dimethylorsellinic acid (DMOA) by the polyketide synthase adrD via condensation of one acetyl-CoA starter unit with 3 malonyl-CoA units and 2 methylations. DMAO is then converted to farnesyl-DMAO by the prenyltransferase adrG. The methyltransferase adrK catalyzes the methylation of the carboxyl group of farnesyl-DMAO to farnesyl-DMAO methyl ester which is further converted to epoxyfarnesyl-DMAO methyl ester by the FAD-dependent monooxygenase adrH. The terpene cyclase adrI then catalyzes the carbon skeletal rearrangement to generate the andrastin E, the first compound in the pathway having the andrastin scaffold, with the tetracyclic ring system. The post-cyclization tailoring enzymes adrF, adrE, adrJ, and adrA, are involved in the conversion of andrastin E into andrastin A. The short chain dehydrogenase adrF is responsible for the oxidation of the C-3 a hydroxyl group of andrastin E to yield the corresponding ketone, andrastin D. The ketoreductase adrE stereoselectively reduces the carbonyl moiety to reverse the stereochemistry of the C-3 position to yield andrastin F. The acetyltransferase adrJ is the acetyltransferase that attaches the acetyl group to the C-3 hydroxyl group of andrastin F to yield andrastin C. Finally, the cytochrome P450 monooxygenase adrA catalyzes two sequential oxidation reactions of the C-23 methyl group, to generate the corresponding alcohol andrastin B, and aldehyde andrastin A. In Penicillium rubens (strain ATCC 28089 / DSM 1075 / NRRL 1951 / Wisconsin 54-1255) (Penicillium chrysogenum), this protein is Acetyltransferase adrJ.